Here is a 349-residue protein sequence, read N- to C-terminus: UDP-N-acetylenolpyruvoylglucosamine reductase (349 aa).

Positions 25-197 (GIAARARFAA…VAVTFRLPKQ (173 aa)) constitute an FAD-binding PCMH-type domain. Residue Arg173 is part of the active site. The active-site Proton donor is the Ser249. Glu345 is an active-site residue.

It belongs to the MurB family. The cofactor is FAD.

Its subcellular location is the cytoplasm. The catalysed reaction is UDP-N-acetyl-alpha-D-muramate + NADP(+) = UDP-N-acetyl-3-O-(1-carboxyvinyl)-alpha-D-glucosamine + NADPH + H(+). The protein operates within cell wall biogenesis; peptidoglycan biosynthesis. Functionally, cell wall formation. The chain is UDP-N-acetylenolpyruvoylglucosamine reductase from Burkholderia orbicola (strain MC0-3).